We begin with the raw amino-acid sequence, 294 residues long: Tyrosine-protein phosphatase (294 aa).

Positions 1–24 (MKTHHANLALALMLGLSSSATAVA) are cleaved as a signal peptide. Catalysis depends on C182, which acts as the Phosphocysteine intermediate. Composition is skewed to basic and acidic residues over residues 221 to 231 (QPKDSDERADH) and 238 to 247 (PGDRPQDGGH). The segment at 221–252 (QPKDSDERADHGAGQAEPGDRPQDGGHGRYRA) is disordered.

Belongs to the protein-tyrosine phosphatase family. In terms of assembly, monomer.

The enzyme catalyses O-phospho-L-tyrosyl-[protein] + H2O = L-tyrosyl-[protein] + phosphate. This Nostoc commune protein is Tyrosine-protein phosphatase (iphP).